Consider the following 179-residue polypeptide: uncharacterized protein (179 aa).

This is an uncharacterized protein from Acanthamoeba polyphaga mimivirus (APMV).